The following is a 241-amino-acid chain: Small ribosomal subunit protein uS3 (241 aa).

The region spanning 39–109 (IRQHVEKNLS…QIRINVIEVS (71 aa)) is the KH type-2 domain. The interval 215-241 (EQAMAAPAPTPRKKRRPQQFEDRSNEE) is disordered. A compositionally biased stretch (basic and acidic residues) spans 232 to 241 (QQFEDRSNEE).

Belongs to the universal ribosomal protein uS3 family. As to quaternary structure, part of the 30S ribosomal subunit. Forms a tight complex with proteins S10 and S14.

Its function is as follows. Binds the lower part of the 30S subunit head. Binds mRNA in the 70S ribosome, positioning it for translation. In Crocosphaera subtropica (strain ATCC 51142 / BH68) (Cyanothece sp. (strain ATCC 51142)), this protein is Small ribosomal subunit protein uS3.